A 273-amino-acid chain; its full sequence is Large ribosomal subunit protein uL2 (273 aa).

A disordered region spans residues 224–263; sequence AMNPVDHPHGGGEGRNFGKHPVTPWGLQTKGKKTRKNKRT. The segment covering 253 to 263 has biased composition (basic residues); that stretch reads KGKKTRKNKRT.

Belongs to the universal ribosomal protein uL2 family. Part of the 50S ribosomal subunit. Forms a bridge to the 30S subunit in the 70S ribosome.

Functionally, one of the primary rRNA binding proteins. Required for association of the 30S and 50S subunits to form the 70S ribosome, for tRNA binding and peptide bond formation. It has been suggested to have peptidyltransferase activity; this is somewhat controversial. Makes several contacts with the 16S rRNA in the 70S ribosome. This chain is Large ribosomal subunit protein uL2, found in Buchnera aphidicola subsp. Schizaphis graminum (strain Sg).